Here is a 143-residue protein sequence, read N- to C-terminus: Transcriptional regulator MraZ (143 aa).

SpoVT-AbrB domains follow at residues 5-47 and 76-119; these read TYTP…SARE and ASDE…DSES.

It belongs to the MraZ family. Forms oligomers.

It localises to the cytoplasm. The protein resides in the nucleoid. The protein is Transcriptional regulator MraZ of Micrococcus luteus (strain ATCC 4698 / DSM 20030 / JCM 1464 / CCM 169 / CCUG 5858 / IAM 1056 / NBRC 3333 / NCIMB 9278 / NCTC 2665 / VKM Ac-2230) (Micrococcus lysodeikticus).